We begin with the raw amino-acid sequence, 220 residues long: Exodeoxyribonuclease 10 (220 aa).

Mg(2+) is required as a cofactor.

Functionally, capable of degrading both single-strand and double-strand DNA with 3' to 5' polarity. Has higher affinity for ssDNA ends than for dsDNA. In Escherichia coli O6:H1 (strain CFT073 / ATCC 700928 / UPEC), this protein is Exodeoxyribonuclease 10 (exoX).